We begin with the raw amino-acid sequence, 277 residues long: MELIEKHASFGGWQNVYRHYSQSLKCEMNVGVYLPPKAENEKLPVLYWLSGLTCNEQNFITKSGMQRYAAEHNIIVVAPDTSPRGSHVADADRYDLGQGAGFYLNATQAPWNEHYKMYDYIRNELPNLVMHHFPATARKSISGHSMGGLGALVLALRNPDEYASVSAFSPIVSPSQVPWGQQAFAAYLGENKDAWLDYDPVSLISQGQRVAEIMVDQGLSDDFYAEQLRTSNLEKICQEMNIKTLIRYHEGYDHSYYFVSSFIGEHIAYHANKLNMR.

Catalysis depends on charge relay system residues Ser-145, Asp-221, and His-254.

It belongs to the esterase D family.

The catalysed reaction is S-formylglutathione + H2O = formate + glutathione + H(+). Functionally, serine hydrolase involved in the detoxification of formaldehyde. Hydrolyzes S-formylglutathione to glutathione and formate. The polypeptide is S-formylglutathione hydrolase FrmB (frmB) (Escherichia coli O6:H1 (strain CFT073 / ATCC 700928 / UPEC)).